The sequence spans 366 residues: N-methyltransferase fsqC (366 aa).

An N-terminal signal peptide occupies residues 1 to 18; the sequence is MSSNVQDIRGWPPPFANA. N-linked (GlcNAc...) asparagine glycosylation is present at N270.

This sequence belongs to the methyltransferase superfamily.

It functions in the pathway secondary metabolite biosynthesis. N-methyltransferase; part of the gene cluster that mediates the biosynthesis of the isoquinoline alkaloids fumisoquin A, fumisoquin B and fumisoquin C; as well as small amounts of fumipyrrole as a shunt metabolite. The products of the cluster lead to a brown coloration and are important for growth and conidiation. The nonribosomal peptide synthetase-like protein fsqF, which lacks a canonical condensation domain, is required for addition of a serine-derived dehydroalanine moiety to activated tyrosine but is not essential for the subsequent steps leading to isoquinoline formation. A different enzyme, most likely the ATP-grasp enzyme fsqD, is responsible for activation of tyrosine. Three additional enzymes encoded by the fsq cluster, the N-methyltransferase fsqC, the phenol 2-monooxygenase fsqG and the FAD-dependent oxidase fsqB, catalyze the formation of the isoquinoline ring system in the fumisoquins. FsqB converts the fspF thiolation domain-bound (2S,4S,5S)-2-amino-6-(3,4-dihydroxyphenyl)-4-hydroxy-5-(methylamino)hexanoyl into isoquinoline. The cyclization most likely proceeds via a two-step mechanism, beginning with FAD-dependent oxidation of the methyl group to an iminium species followed by electrophilic attack on the deprotonated phenol. In Aspergillus fumigatus (strain ATCC MYA-4609 / CBS 101355 / FGSC A1100 / Af293) (Neosartorya fumigata), this protein is N-methyltransferase fsqC.